We begin with the raw amino-acid sequence, 258 residues long: Acetylglutamate kinase (258 aa).

Substrate is bound by residues 41–42, Arg63, and Asn156; that span reads GG.

Belongs to the acetylglutamate kinase family. ArgB subfamily.

It is found in the cytoplasm. The enzyme catalyses N-acetyl-L-glutamate + ATP = N-acetyl-L-glutamyl 5-phosphate + ADP. The protein operates within amino-acid biosynthesis; L-arginine biosynthesis; N(2)-acetyl-L-ornithine from L-glutamate: step 2/4. In terms of biological role, catalyzes the ATP-dependent phosphorylation of N-acetyl-L-glutamate. This chain is Acetylglutamate kinase, found in Bacillus amyloliquefaciens (Bacillus velezensis).